The sequence spans 293 residues: Protease HtpX (293 aa).

2 helical membrane-spanning segments follow: residues 4 to 24 (IALF…VLSL) and 34 to 54 (GLMI…LLMS). H139 contacts Zn(2+). E140 is an active-site residue. Residue H143 participates in Zn(2+) binding. The next 2 membrane-spanning stretches (helical) occupy residues 158-178 (VVNT…AGFL) and 193-213 (MVYF…ASII). E222 contributes to the Zn(2+) binding site.

This sequence belongs to the peptidase M48B family. The cofactor is Zn(2+).

The protein resides in the cell inner membrane. The sequence is that of Protease HtpX from Yersinia pseudotuberculosis serotype O:1b (strain IP 31758).